Consider the following 245-residue polypeptide: MTTPTTVAGVDLPDLQPARELPARPEPLRMKPGETALVVVDMQNAYASLGGYLDLAGFDVSSTGPVIANINKACAAARAAGIPVIFFQNGWDPAYVEAGGPGSPNWHKSNALKTMRKRPELEGQLLAKGGWDYQLVDELTPQPGDIVVPKIRYSGFFNSSFDSVLRSRGIRNLVFTGIATNVCVESTLRDGFHLEYFGVVLADATHQAGPEFAQQAALFNIETFFGWVSSVDDFCTTFSPVGQPS.

The active-site Proton acceptor is aspartate 41. Residue lysine 150 is part of the active site. Catalysis depends on cysteine 183, which acts as the Nucleophile.

It belongs to the isochorismatase family. RutB subfamily.

The enzyme catalyses (Z)-3-ureidoacrylate + H2O + H(+) = (Z)-3-aminoacrylate + NH4(+) + CO2. It catalyses the reaction (Z)-3-ureidoacrylate + H2O = (Z)-3-aminoacrylate + carbamate + H(+). The catalysed reaction is (Z)-2-methylureidoacrylate + H2O + H(+) = (Z)-2-methylaminoacrylate + NH4(+) + CO2. In terms of biological role, hydrolyzes ureidoacrylate to form aminoacrylate and carbamate. The carbamate hydrolyzes spontaneously, thereby releasing one of the nitrogen atoms of the pyrimidine ring as ammonia and one of its carbon atoms as CO2. In Pseudomonas syringae pv. syringae (strain B728a), this protein is Ureidoacrylate amidohydrolase RutB.